Here is a 500-residue protein sequence, read N- to C-terminus: ACT domain-containing protein ACR2 (500 aa).

4 consecutive ACT domains span residues 39 to 121 (VVKV…EANN), 136 to 213 (AIEM…ADPA), 298 to 373 (IVTV…RVCE), and 376 to 459 (KLEL…TVGS). Positions 450–478 (EDTKIDTVGSDEPTASASATPQRQPQPHR) are disordered. Over residues 462–474 (PTASASATPQRQP) the composition is skewed to polar residues.

Functionally, may bind amino acids. The chain is ACT domain-containing protein ACR2 from Arabidopsis thaliana (Mouse-ear cress).